A 350-amino-acid chain; its full sequence is Holliday junction branch migration complex subunit RuvB (350 aa).

Residues 4–184 are large ATPase domain (RuvB-L); the sequence is TDRLIAAQPQ…FGIVQRLEFY (181 aa). ATP-binding positions include Ile23, Arg24, Gly65, Lys68, Thr69, Thr70, 131-133, Arg174, Tyr184, and Arg221; that span reads EDY. Thr69 is a Mg(2+) binding site. Positions 185 to 255 are small ATPAse domain (RuvB-S); that stretch reads AVEELTEIVV…IADQALNMLH (71 aa). The interval 258–350 is head domain (RuvB-H); sequence RHGLDHMDRR…PLTPPGESDA (93 aa). Residues Arg294, Arg313, and Arg318 each contribute to the DNA site.

This sequence belongs to the RuvB family. Homohexamer. Forms an RuvA(8)-RuvB(12)-Holliday junction (HJ) complex. HJ DNA is sandwiched between 2 RuvA tetramers; dsDNA enters through RuvA and exits via RuvB. An RuvB hexamer assembles on each DNA strand where it exits the tetramer. Each RuvB hexamer is contacted by two RuvA subunits (via domain III) on 2 adjacent RuvB subunits; this complex drives branch migration. In the full resolvosome a probable DNA-RuvA(4)-RuvB(12)-RuvC(2) complex forms which resolves the HJ.

It localises to the cytoplasm. It carries out the reaction ATP + H2O = ADP + phosphate + H(+). In terms of biological role, the RuvA-RuvB-RuvC complex processes Holliday junction (HJ) DNA during genetic recombination and DNA repair, while the RuvA-RuvB complex plays an important role in the rescue of blocked DNA replication forks via replication fork reversal (RFR). RuvA specifically binds to HJ cruciform DNA, conferring on it an open structure. The RuvB hexamer acts as an ATP-dependent pump, pulling dsDNA into and through the RuvAB complex. RuvB forms 2 homohexamers on either side of HJ DNA bound by 1 or 2 RuvA tetramers; 4 subunits per hexamer contact DNA at a time. Coordinated motions by a converter formed by DNA-disengaged RuvB subunits stimulates ATP hydrolysis and nucleotide exchange. Immobilization of the converter enables RuvB to convert the ATP-contained energy into a lever motion, pulling 2 nucleotides of DNA out of the RuvA tetramer per ATP hydrolyzed, thus driving DNA branch migration. The RuvB motors rotate together with the DNA substrate, which together with the progressing nucleotide cycle form the mechanistic basis for DNA recombination by continuous HJ branch migration. Branch migration allows RuvC to scan DNA until it finds its consensus sequence, where it cleaves and resolves cruciform DNA. The protein is Holliday junction branch migration complex subunit RuvB of Chromohalobacter salexigens (strain ATCC BAA-138 / DSM 3043 / CIP 106854 / NCIMB 13768 / 1H11).